A 677-amino-acid chain; its full sequence is Methionine--tRNA ligase (677 aa).

The 'HIGH' region signature appears at 14–24 (PYANGAIHLGH). Zn(2+) is bound by residues Cys145, Cys148, Cys158, and Cys161. The short motif at 330–334 (KMSKS) is the 'KMSKS' region element. Lys333 contributes to the ATP binding site. The region spanning 576–677 (DFAKVDLRVA…EGALPGMRVM (102 aa)) is the tRNA-binding domain.

It belongs to the class-I aminoacyl-tRNA synthetase family. MetG type 1 subfamily. As to quaternary structure, homodimer. The cofactor is Zn(2+).

It localises to the cytoplasm. It carries out the reaction tRNA(Met) + L-methionine + ATP = L-methionyl-tRNA(Met) + AMP + diphosphate. In terms of biological role, is required not only for elongation of protein synthesis but also for the initiation of all mRNA translation through initiator tRNA(fMet) aminoacylation. The protein is Methionine--tRNA ligase of Saccharophagus degradans (strain 2-40 / ATCC 43961 / DSM 17024).